The primary structure comprises 351 residues: Homoserine O-acetyltransferase (351 aa).

The AB hydrolase-1 domain occupies 51–334 (VIWVLHALTG…IYGHDAFLIE (284 aa)). The Nucleophile role is filled by Ser-146. Arg-212 lines the substrate pocket. Active-site residues include Asp-299 and His-328. Residue Asp-329 participates in substrate binding.

Belongs to the AB hydrolase superfamily. MetX family. As to quaternary structure, homodimer.

It is found in the cytoplasm. The catalysed reaction is L-homoserine + acetyl-CoA = O-acetyl-L-homoserine + CoA. Its pathway is amino-acid biosynthesis; L-methionine biosynthesis via de novo pathway; O-acetyl-L-homoserine from L-homoserine: step 1/1. Transfers an acetyl group from acetyl-CoA to L-homoserine, forming acetyl-L-homoserine. The sequence is that of Homoserine O-acetyltransferase from Cyclobacterium marinum (strain ATCC 25205 / DSM 745 / LMG 13164 / NCIMB 1802) (Flectobacillus marinus).